The sequence spans 133 residues: Putative pre-16S rRNA nuclease (133 aa).

It belongs to the YqgF nuclease family.

The protein localises to the cytoplasm. In terms of biological role, could be a nuclease involved in processing of the 5'-end of pre-16S rRNA. The chain is Putative pre-16S rRNA nuclease from Bordetella bronchiseptica (strain ATCC BAA-588 / NCTC 13252 / RB50) (Alcaligenes bronchisepticus).